The chain runs to 479 residues: Ammonium transporter 3 member 2 (479 aa).

The next 11 membrane-spanning stretches (helical) occupy residues 34–54, 59–79, 139–159, 164–184, 202–222, 237–257, 272–292, 297–317, 321–341, 355–375, and 407–427; these read VAAT…YGGV, WAVN…ICWV, VVYF…GSLL, FLAW…VGAF, GGYV…YWVG, ILFT…FNGG, NTNI…VIFF, VVGA…AAGV, WAAL…MMIL, LGVF…TGLF, and IAGG…ICLA.

It belongs to the ammonia transporter channel (TC 1.A.11.2) family.

The protein resides in the membrane. Its function is as follows. Involved in ammonium transport. The polypeptide is Ammonium transporter 3 member 2 (AMT3-2) (Oryza sativa subsp. japonica (Rice)).